A 304-amino-acid polypeptide reads, in one-letter code: HPr kinase/phosphorylase (304 aa).

Residues H136 and K157 contribute to the active site. Residue 151 to 158 (GESGIGKS) participates in ATP binding. S158 contacts Mg(2+). D175 acts as the Proton acceptor; for phosphorylation activity. Proton donor; for dephosphorylation activity in catalysis. Positions 198–207 (LEVRGMGIID) are important for the catalytic mechanism of both phosphorylation and dephosphorylation. E199 contacts Mg(2+). R240 is an active-site residue. The important for the catalytic mechanism of dephosphorylation stretch occupies residues 261 to 266 (PIRPGR).

This sequence belongs to the HPrK/P family. As to quaternary structure, homohexamer. Mg(2+) is required as a cofactor.

The enzyme catalyses [HPr protein]-L-serine + ATP = [HPr protein]-O-phospho-L-serine + ADP + H(+). The catalysed reaction is [HPr protein]-O-phospho-L-serine + phosphate + H(+) = [HPr protein]-L-serine + diphosphate. Its function is as follows. Catalyzes the ATP- as well as the pyrophosphate-dependent phosphorylation of a specific serine residue in HPr, a phosphocarrier protein of the phosphoenolpyruvate-dependent sugar phosphotransferase system (PTS). HprK/P also catalyzes the pyrophosphate-producing, inorganic phosphate-dependent dephosphorylation (phosphorolysis) of seryl-phosphorylated HPr (P-Ser-HPr). The two antagonistic activities of HprK/P are regulated by several intracellular metabolites, which change their concentration in response to the absence or presence of rapidly metabolisable carbon sources (glucose, fructose, etc.) in the growth medium. Therefore, by controlling the phosphorylation state of HPr, HPrK/P is a sensor enzyme that plays a major role in the regulation of carbon metabolism and sugar transport: it mediates carbon catabolite repression (CCR), and regulates PTS-catalyzed carbohydrate uptake and inducer exclusion. This is HPr kinase/phosphorylase from Clostridium acetobutylicum (strain ATCC 824 / DSM 792 / JCM 1419 / IAM 19013 / LMG 5710 / NBRC 13948 / NRRL B-527 / VKM B-1787 / 2291 / W).